A 710-amino-acid polypeptide reads, in one-letter code: Early transcription factor 82 kDa subunit (710 aa).

Belongs to the poxviridae VETF large subunit family. Heterodimer of a 70 kDa and a 82 kDa subunit. Part of the early transcription complex composed of ETF, RAP94/OPG109, and the DNA-directed RNA polymerase.

It localises to the virion. Functionally, acts with RNA polymerase to initiate transcription from early gene promoters. Is recruited by the RPO-associated protein of 94 kDa RAP94/OPG109 to form the early transcription complex, which also contains the core RNA polymerase. ETF heterodimer binds to early gene promoters. In Homo sapiens (Human), this protein is Early transcription factor 82 kDa subunit (OPG133).